The chain runs to 231 residues: 2,3-bisphosphoglycerate-dependent phosphoglycerate mutase (231 aa).

Residues 8 to 15 (RHGESEWN), 21 to 22 (TG), R60, 87 to 90 (ERHY), K98, 114 to 115 (RR), and 183 to 184 (GN) each bind substrate. H9 acts as the Tele-phosphohistidine intermediate in catalysis. E87 (proton donor/acceptor) is an active-site residue.

The protein belongs to the phosphoglycerate mutase family. BPG-dependent PGAM subfamily.

It catalyses the reaction (2R)-2-phosphoglycerate = (2R)-3-phosphoglycerate. It functions in the pathway carbohydrate degradation; glycolysis; pyruvate from D-glyceraldehyde 3-phosphate: step 3/5. Its function is as follows. Catalyzes the interconversion of 2-phosphoglycerate and 3-phosphoglycerate. In Streptococcus equi subsp. zooepidemicus (strain H70), this protein is 2,3-bisphosphoglycerate-dependent phosphoglycerate mutase.